The following is a 602-amino-acid chain: Bifunctional xylanase/deacetylase (602 aa).

Positions 1–14 (MSATLLVPSMTVKA) are cleaved as a signal peptide. One can recognise a GH11 domain in the interval 17–211 (TIYNNKTGNQ…SSGSASVYKN (195 aa)). Glu108 acts as the Nucleophile in catalysis. Catalysis depends on Glu198, which acts as the Proton donor. The segment at 216–240 (GGSSSSSGNQGGNQGGNTGNENAGN) is disordered. The span at 224–233 (NQGGNQGGNT) shows a compositional bias: gly residues. The 118-residue stretch at 249–366 (DKIQCETMTK…DAYLDYFNNS (118 aa)) folds into the CBM6 domain. A NodB homology domain is found at 402–578 (KLIALTFDDG…GLKNQGYTFV (177 aa)).

Belongs to the glycosyl hydrolase 11 (cellulase G) family. In the later growth phases, seems to undergo a proteolytic cleavage into a 30 kDa protein possessing xylanolytic activity.

It is found in the secreted. The enzyme catalyses Endohydrolysis of (1-&gt;4)-beta-D-xylosidic linkages in xylans.. Its pathway is glycan degradation; xylan degradation. Its function is as follows. Endo-acting xylanase which specifically cleaves internal linkages on the xylan backbone, releasing xylooligosaccharides. Is also probably able, via its C-terminal domain, to remove acetyl groups from acetylated xylan, and thus it is probably capable of hydrolyzing acetylated xylan. This chain is Bifunctional xylanase/deacetylase (xyn11A), found in Pseudobutyrivibrio xylanivorans.